A 396-amino-acid chain; its full sequence is Calcium-responsive transactivator (396 aa).

The tract at residues 1-148 (MSVAFASARP…TLPTTSMSIS (148 aa)) is N-terminal auto-inhibitory domain; necessary for interaction with SMARCA4/BRG1. The SH2-binding motif lies at 50–53 (YQQI). 3 disordered regions span residues 72–162 (QSLL…SQGV), 192–280 (QAAT…GDYA), and 311–396 (SQQQ…NYQQ). The span at 90–106 (LTQSGSSQGLHSQGSLS) shows a compositional bias: low complexity. 2 stretches are compositionally biased toward polar residues: residues 107–122 (DAISTGLPPSSLLQGQ) and 128–147 (SHVSMQQTAPNTLPTTSMSI). The interval 149 to 232 (GPGYSHAGPA…GSSMMGQRPM (84 aa)) is methionine-rich intra-molecular domain. 3 stretches are compositionally biased toward low complexity: residues 199-229 (SSAQGGSQHYQGQSSIAMMGQGSQGSSMMGQ), 238-261 (SQQGSSQQYLGQEEYYGEQYSHSQ), and 311-369 (SQQQ…YGSY). The tract at residues 246–317 (YLGQEEYYGE…SQYSQQQAGY (72 aa)) is MFD domain. Residues 334 to 396 (SQQSYPGQQQ…EQGQYGNYQQ (63 aa)) are necessary for nuclear localization. The short motif at 353–356 (SQYP) is the SH2-binding element. The short motif at 371–379 (APQTAPSAQ) is the SH3-binding element. Over residues 384-396 (YGYEQGQYGNYQQ) the composition is skewed to low complexity. The necessary for interaction with CREBBP and for the recruitment of CREBBP to the nuclear bodies stretch occupies residues 387–396 (EQGQYGNYQQ). The short motif at 391–394 (YGNY) is the SH2-binding element.

Belongs to the SS18 family. In terms of assembly, homodimer. Dimerization may be necessary for its function in neuronal dendritic development. Interacts (via C-terminus) with CREBBP (via N-terminus), EP300 and SMARCA4/BRG1. Interacts with the nBAF complex. Association with CREBBP facilitates transcription while the association with SMARCA4/BRG1 suppresses CREST-mediated transcription in resting neurons. Ubiquitous; with lowest levels in spleen.

It is found in the nucleus. Its subcellular location is the chromosome. The protein resides in the centromere. It localises to the kinetochore. Functionally, transcriptional activator which is required for calcium-dependent dendritic growth and branching in cortical neurons. Recruits CREB-binding protein (CREBBP) to nuclear bodies. Component of the CREST-BRG1 complex, a multiprotein complex that regulates promoter activation by orchestrating a calcium-dependent release of a repressor complex and a recruitment of an activator complex. In resting neurons, transcription of the c-FOS promoter is inhibited by BRG1-dependent recruitment of a phospho-RB1-HDAC1 repressor complex. Upon calcium influx, RB1 is dephosphorylated by calcineurin, which leads to release of the repressor complex. At the same time, there is increased recruitment of CREBBP to the promoter by a CREST-dependent mechanism, which leads to transcriptional activation. The CREST-BRG1 complex also binds to the NR2B promoter, and activity-dependent induction of NR2B expression involves a release of HDAC1 and recruitment of CREBBP. This is Calcium-responsive transactivator (SS18L1) from Homo sapiens (Human).